Here is a 248-residue protein sequence, read N- to C-terminus: Protein G1-like6 (248 aa).

The span at 1-15 shows a compositional bias: basic residues; sequence MDRHHHHHHHHHHHM. 3 disordered regions span residues 1–35, 50–84, and 198–248; these read MDRHHHHHHHHHHHMMSGGGQDPAAGDGGAGGATQ, GAGSSSSGAGTSAGGGGGGPSPSSSSPSLSRYESQ, and ARGI…FIIP. The span at 17–32 shows a compositional bias: gly residues; it reads SGGGQDPAAGDGGAGG. A compositionally biased stretch (low complexity) spans 50–59; that stretch reads GAGSSSSGAG. Residues 60 to 69 show a composition bias toward gly residues; the sequence is TSAGGGGGGP. A compositionally biased stretch (low complexity) spans 70–79; that stretch reads SPSSSSPSLS. Residues 80-207 form the ALOG domain; the sequence is RYESQKRRDW…ARGISYEKKK (128 aa). Residues 205 to 209 carry the Nuclear localization signal motif; that stretch reads KKKRK. Composition is skewed to low complexity over residues 212-224 and 239-248; these read SSAGAGAGPSSEG and TSASPQFIIP.

It belongs to the plant homeotic and developmental regulators ALOG protein family.

It is found in the nucleus. Its function is as follows. Probable transcription regulator that acts as a developmental regulator by promoting cell growth in response to light. The sequence is that of Protein G1-like6 from Oryza sativa subsp. indica (Rice).